The following is a 424-amino-acid chain: UPF0597 protein Ssed_2537 (424 aa).

The protein belongs to the UPF0597 family.

The sequence is that of UPF0597 protein Ssed_2537 from Shewanella sediminis (strain HAW-EB3).